The following is a 200-amino-acid chain: MSTSISTTATPSTPGERAWALFQVLKSKELIPEGYVEQLTQLMAHDWSPENGARVVAKAWVDPQFRALLLKDGTAACAQFGYTGPQGEYIVALEDTPGVKNVIVCSLCSCTNWPVLGLPPEWYKGFEFRARLVREGRTVLRELGTELPSDTVIKVWDTSAESRYLVLPQRPEGSEHMSEEQLQQLVTKDVLIGVALPRVG.

Positions 105, 108, 109, and 110 each coordinate Fe(3+). Residue Cys-108 is modified to Cysteine sulfinic acid (-SO2H). A Cysteine sulfenic acid (-SOH) modification is found at Cys-110.

This sequence belongs to the nitrile hydratase subunit alpha family. As to quaternary structure, heterodimer of an alpha and a beta chain. Fe(3+) serves as cofactor. Post-translationally, oxidation on Cys-108 is essential for the activity. In terms of processing, oxidation on Cys-110 stabilizes the Fe-NO ligand coordinated in the inactive form.

It carries out the reaction an aliphatic primary amide = an aliphatic nitrile + H2O. Inactivated by oxidation of Cys-110 to a sulfenic acid. Functionally, NHase catalyzes the hydration of various nitrile compounds to the corresponding amides. Industrial production of acrylamide is now being developed using some of the enzymes of this class. The chain is Nitrile hydratase subunit alpha (nthA) from Pseudomonas chlororaphis (Pseudomonas aureofaciens).